The sequence spans 756 residues: Amine oxidase [copper-containing] 2 (756 aa).

The Cytoplasmic portion of the chain corresponds to 1–4; that stretch reads MHLK. Residues 5–25 traverse the membrane as a helical segment; the sequence is IVLAFLALSLITIFALAYVLL. At 26–756 the chain is on the extracellular side; it reads TSPGGSSQPP…DLPPFSYHGF (731 aa). N-linked (GlcNAc...) asparagine glycosylation is found at asparagine 133, asparagine 198, and asparagine 226. The active-site Proton acceptor is the aspartate 380. Cysteine 398 and cysteine 424 are oxidised to a cystine. The active-site Schiff-base intermediate with substrate; via topaquinone is tyrosine 465. A 2',4',5'-topaquinone modification is found at tyrosine 465. Positions 516 and 518 each coordinate Cu(2+). Residues aspartate 525, leucine 526, aspartate 527, glutamate 568, glutamate 637, phenylalanine 659, and asparagine 661 each coordinate Ca(2+). Residue asparagine 662 is glycosylated (N-linked (GlcNAc...) asparagine). Residues glutamate 663, aspartate 669, and leucine 670 each coordinate Ca(2+). Histidine 680 serves as a coordination point for Cu(2+). Cysteine 730 and cysteine 737 are oxidised to a cystine.

This sequence belongs to the copper/topaquinone oxidase family. As to quaternary structure, homodimer; disulfide-linked. Probably forms heterodimers with AOC3. It depends on Cu(2+) as a cofactor. Requires Ca(2+) as cofactor. The cofactor is L-topaquinone. Topaquinone (TPQ) is generated by copper-dependent autoxidation of a specific tyrosyl residue. As to expression, expressed in many tissues including adipocytes with higher expression in retina where it is active. In terms of tissue distribution, not expressed in testis. Not expressed in thymus.

It localises to the cell membrane. Its subcellular location is the cytoplasm. The enzyme catalyses 2-phenylethylamine + O2 + H2O = 2-phenylacetaldehyde + H2O2 + NH4(+). It catalyses the reaction tryptamine + O2 + H2O = indole-3-acetaldehyde + H2O2 + NH4(+). The catalysed reaction is tyramine + O2 + H2O = (4-hydroxyphenyl)acetaldehyde + H2O2 + NH4(+). Functionally, catalyzes the oxidative deamination of primary amines to the corresponding aldehydes with the concomitant production of hydrogen peroxide and ammonia. Has a preference for 2-phenylethylamine, tryptamine and tyramine. Could also act on methylamine and benzylamine but much less efficiently. This is Amine oxidase [copper-containing] 2 from Homo sapiens (Human).